Here is a 150-residue protein sequence, read N- to C-terminus: Protein Smg homolog (150 aa).

This sequence belongs to the Smg family.

The polypeptide is Protein Smg homolog (Leptothrix cholodnii (strain ATCC 51168 / LMG 8142 / SP-6) (Leptothrix discophora (strain SP-6))).